The sequence spans 140 residues: Nucleoside diphosphate kinase (140 aa).

Residues Lys-11, Phe-59, Arg-87, Thr-93, Arg-104, and Asn-114 each contribute to the ATP site. His-117 acts as the Pros-phosphohistidine intermediate in catalysis.

Belongs to the NDK family. Homotetramer. Requires Mg(2+) as cofactor.

It localises to the cytoplasm. The enzyme catalyses a 2'-deoxyribonucleoside 5'-diphosphate + ATP = a 2'-deoxyribonucleoside 5'-triphosphate + ADP. The catalysed reaction is a ribonucleoside 5'-diphosphate + ATP = a ribonucleoside 5'-triphosphate + ADP. Major role in the synthesis of nucleoside triphosphates other than ATP. The ATP gamma phosphate is transferred to the NDP beta phosphate via a ping-pong mechanism, using a phosphorylated active-site intermediate. This Rickettsia felis (strain ATCC VR-1525 / URRWXCal2) (Rickettsia azadi) protein is Nucleoside diphosphate kinase.